Consider the following 251-residue polypeptide: Tryptophan synthase alpha chain (251 aa).

Active-site proton acceptor residues include glutamate 46 and aspartate 57.

Belongs to the TrpA family. In terms of assembly, tetramer of two alpha and two beta chains.

It carries out the reaction (1S,2R)-1-C-(indol-3-yl)glycerol 3-phosphate + L-serine = D-glyceraldehyde 3-phosphate + L-tryptophan + H2O. It participates in amino-acid biosynthesis; L-tryptophan biosynthesis; L-tryptophan from chorismate: step 5/5. In terms of biological role, the alpha subunit is responsible for the aldol cleavage of indoleglycerol phosphate to indole and glyceraldehyde 3-phosphate. This is Tryptophan synthase alpha chain from Karelsulcia muelleri (strain GWSS) (Sulcia muelleri).